Consider the following 641-residue polypeptide: Calpain-6 (641 aa).

In terms of domain architecture, Calpain catalytic spans 26–343 (LFCDPTFLPE…FHKLNVCRNV (318 aa)). The segment at 344-495 (NNPIFGRKEL…IFSEVPVQLR (152 aa)) is domain III. The C2 domain occupies 498-621 (TLDMPKMSCW…YLRKKGGPTA (124 aa)).

The protein belongs to the peptidase C2 family. Interacts (via domain III) with microtubules. Interacts (via domain II) with ARHGEF2 (via the N-terminal zinc finger). In terms of tissue distribution, expressed only in placenta.

Its subcellular location is the cytoplasm. The protein localises to the perinuclear region. It is found in the cytoskeleton. The protein resides in the spindle. Microtubule-stabilizing protein that may be involved in the regulation of microtubule dynamics and cytoskeletal organization. May act as a regulator of RAC1 activity through interaction with ARHGEF2 to control lamellipodial formation and cell mobility. Does not seem to have protease activity as it has lost the active site residues. This is Calpain-6 (CAPN6) from Homo sapiens (Human).